Here is a 91-residue protein sequence, read N- to C-terminus: Small ribosomal subunit protein uS19 (91 aa).

It belongs to the universal ribosomal protein uS19 family.

Its function is as follows. Protein S19 forms a complex with S13 that binds strongly to the 16S ribosomal RNA. The chain is Small ribosomal subunit protein uS19 from Bordetella petrii (strain ATCC BAA-461 / DSM 12804 / CCUG 43448).